The sequence spans 531 residues: GTPase Obg (531 aa).

In terms of domain architecture, Obg spans 2–159 (ASFVDRVIVH…QEVELELKSI (158 aa)). Residues 160–341 (ADIALVGFPS…LSFAMAALVS (182 aa)) form the OBG-type G domain. GTP contacts are provided by residues 166–173 (GFPSAGKS), 191–195 (FTTLV), 212–215 (DVPG), 293–296 (NKVD), and 322–324 (STA). Residues S173 and T193 each contribute to the Mg(2+) site. Residues 346–365 (QEEQREQQRQTVPVLQPEPV) are disordered. Residues 368 to 453 (RRGRDRREFV…ENGVVFDWEP (86 aa)) form the OCT domain. Residues 459–531 (AELLGGPRGS…TSETKETNEK (73 aa)) form a disordered region. Basic and acidic residues-rich tracts occupy residues 468-507 (SDLR…ERRA) and 514-531 (VDAR…TNEK).

It belongs to the TRAFAC class OBG-HflX-like GTPase superfamily. OBG GTPase family. As to quaternary structure, monomer. Mg(2+) serves as cofactor.

Its subcellular location is the cytoplasm. In terms of biological role, an essential GTPase which binds GTP, GDP and possibly (p)ppGpp with moderate affinity, with high nucleotide exchange rates and a fairly low GTP hydrolysis rate. Plays a role in control of the cell cycle, stress response, ribosome biogenesis and in those bacteria that undergo differentiation, in morphogenesis control. In Kocuria rhizophila (strain ATCC 9341 / DSM 348 / NBRC 103217 / DC2201), this protein is GTPase Obg.